Reading from the N-terminus, the 761-residue chain is Protein spire homolog 1 (761 aa).

Disordered stretches follow at residues 1-23 (MTDGGMLISPSALQDPGDGARPE) and 160-183 (DCPDEGYEATEEEDEGEEENAEVS). Residues 36–223 (LCLEEILTLY…RALYAETKEL (188 aa)) form the KIND domain. Over residues 160-180 (DCPDEGYEATEEEDEGEEENA) the composition is skewed to acidic residues. The stretch at 218 to 246 (AETKELRTFLEKIKSAKENLRKMEGETEE) forms a coiled coil. WH2 domains are found at residues 295 to 313 (PYEMLMDDIRSKRYKLRKV) and 359 to 376 (LHERILEEIRSERKLRPV). 2 disordered regions span residues 375 to 406 (PVSPDMIRRSRLGAGKSISTPQDLFRSSDIPD) and 419 to 539 (ANGT…KSLA). Residues 469 to 480 (SSSSISTSLVED) are compositionally biased toward low complexity. Over residues 504-520 (PDKRIAPQRRHSIEKEA) the composition is skewed to basic and acidic residues. A spir-box region spans residues 557-577 (LTLTVEEVMHIRQVLVKAELE). Disordered stretches follow at residues 630-694 (PSKP…DELE) and 728-761 (STKRARLHRRTHSVYSSSTSSSNYKPTERTIKEV). Positions 636–647 (SLPISSLGPSIL) are enriched in low complexity. The segment covering 682–693 (KHGDRSSSKDEL) has biased composition (basic and acidic residues). Residues 728–739 (STKRARLHRRTH) show a composition bias toward basic residues. Positions 740-749 (SVYSSSTSSS) are enriched in low complexity.

Belongs to the spire family.

The protein resides in the cytoplasm. The protein localises to the cytoskeleton. It localises to the cytosol. Its subcellular location is the cleavage furrow. It is found in the perinuclear region. The protein resides in the cell membrane. The protein localises to the cytoplasmic vesicle membrane. Its function is as follows. Acts as an actin nucleation factor, remains associated with the slow-growing pointed end of the new filament. Involved in intracellular vesicle transport along actin fibers, providing a novel link between actin cytoskeleton dynamics and intracellular transport. Required for asymmetric spindle positioning and asymmetric cell division during meiosis. Required for normal formation of the cleavage furrow and for polar body extrusion during female germ cell meiosis. Also acts in the nucleus: together with FMN2, promotes assembly of nuclear actin filaments in response to DNA damage in order to facilitate movement of chromatin and repair factors after DNA damage. In addition, promotes innate immune signaling downstream of dsRNA sensing. Mechanistically, contributes to IRF3 phosphorylation and activation downstream of MAVS and upstream of TBK1. This Danio rerio (Zebrafish) protein is Protein spire homolog 1.